A 142-amino-acid chain; its full sequence is Coiled-coil-helix-coiled-coil-helix domain-containing protein 10, mitochondrial (142 aa).

The N-terminal 16 residues, 1–16 (MPRGSRSAASRPASRP), are a transit peptide targeting the mitochondrion. A compositionally biased stretch (low complexity) spans 1–20 (MPRGSRSAASRPASRPAAPS). Disordered regions lie at residues 1–45 (MPRG…PGLM) and 68–97 (ALTGAFSGGSSEPSQPAVQQAPTPAAPQPL). Over residues 21–39 (AHPPAHPPPSAAAPAPAPS) the composition is skewed to pro residues. A compositionally biased stretch (low complexity) spans 80-90 (PSQPAVQQAPT). The 42-residue stretch at 99-140 (MGPCAYEIRQFLDCSTTQSDLSLCEGFSEALKQCKYYHGLSS) folds into the CHCH domain. 2 consecutive short sequence motifs (cx9C motif) follow at residues 102-112 (CAYEIRQFLDC) and 122-132 (CEGFSEALKQC). 2 disulfides stabilise this stretch: Cys-102–Cys-132 and Cys-112–Cys-122.

Ubiquitously expressed. Higher expression is observed in heart and liver.

Its subcellular location is the mitochondrion intermembrane space. In terms of biological role, may be involved in the maintenance of mitochondrial organization and mitochondrial cristae structure. This chain is Coiled-coil-helix-coiled-coil-helix domain-containing protein 10, mitochondrial (CHCHD10), found in Homo sapiens (Human).